A 757-amino-acid polypeptide reads, in one-letter code: POU domain, class 2, transcription factor 1 (757 aa).

Disordered regions lie at residues 1 to 43 (MKLH…QTNG), 271 to 295 (AATP…SLEE), 375 to 398 (SLSN…RRKK), and 532 to 574 (VSSV…TSPL). 2 stretches are compositionally biased toward polar residues: residues 19–43 (RMNN…QTNG) and 275–285 (VQQLPQSQTTP). The region spanning 294–368 (EEPSDLEELE…LLEKWLNDAE (75 aa)) is the POU-specific domain. A DNA-binding region (homeobox) is located at residues 395-454 (RRKKRTSIETNIRVALEKSFLENQKPTSEEITMIADQLNMEKEVIRVWFCNRRQKEKRIN).

The protein belongs to the POU transcription factor family. Class-2 subfamily.

The protein localises to the cytoplasm. It localises to the nucleus. In terms of biological role, transcription factor that binds to the octamer motif (5'-ATTTGCAT-3') and activates the promoters of the genes for some small nuclear RNAs (snRNA) and histone H2B. Acts downstream of Notch signaling during radial glia formation. Regulates apoptosis, possibly via an FGF-signaling pathway. The polypeptide is POU domain, class 2, transcription factor 1 (Xenopus tropicalis (Western clawed frog)).